The primary structure comprises 93 residues: DNA-directed RNA polymerase subunit omega (93 aa).

Belongs to the RNA polymerase subunit omega family. As to quaternary structure, the RNAP catalytic core consists of 2 alpha, 1 beta, 1 beta' and 1 omega subunit. When a sigma factor is associated with the core the holoenzyme is formed, which can initiate transcription.

The enzyme catalyses RNA(n) + a ribonucleoside 5'-triphosphate = RNA(n+1) + diphosphate. Its function is as follows. Promotes RNA polymerase assembly. Latches the N- and C-terminal regions of the beta' subunit thereby facilitating its interaction with the beta and alpha subunits. The polypeptide is DNA-directed RNA polymerase subunit omega (Actinobacillus pleuropneumoniae serotype 7 (strain AP76)).